We begin with the raw amino-acid sequence, 470 residues long: tRNA-2-methylthio-N(6)-dimethylallyladenosine synthase (470 aa).

An MTTase N-terminal domain is found at 20-138 (PRVHIETFGC…LPELVERARS (119 aa)). [4Fe-4S] cluster contacts are provided by Cys29, Cys65, Cys99, Cys176, Cys180, and Cys183. The region spanning 162–398 (REGDLKAWVT…MEVQNRIARA (237 aa)) is the Radical SAM core domain. The 64-residue stretch at 401–464 (EARVGKVYDI…TWTLEGELVE (64 aa)) folds into the TRAM domain.

It belongs to the methylthiotransferase family. MiaB subfamily. In terms of assembly, monomer. [4Fe-4S] cluster serves as cofactor.

The protein resides in the cytoplasm. The enzyme catalyses N(6)-dimethylallyladenosine(37) in tRNA + (sulfur carrier)-SH + AH2 + 2 S-adenosyl-L-methionine = 2-methylsulfanyl-N(6)-dimethylallyladenosine(37) in tRNA + (sulfur carrier)-H + 5'-deoxyadenosine + L-methionine + A + S-adenosyl-L-homocysteine + 2 H(+). Its function is as follows. Catalyzes the methylthiolation of N6-(dimethylallyl)adenosine (i(6)A), leading to the formation of 2-methylthio-N6-(dimethylallyl)adenosine (ms(2)i(6)A) at position 37 in tRNAs that read codons beginning with uridine. This Symbiobacterium thermophilum (strain DSM 24528 / JCM 14929 / IAM 14863 / T) protein is tRNA-2-methylthio-N(6)-dimethylallyladenosine synthase.